An 887-amino-acid chain; its full sequence is Alanine--tRNA ligase (887 aa).

Zn(2+)-binding residues include H581, H585, C683, and H687.

The protein belongs to the class-II aminoacyl-tRNA synthetase family. The cofactor is Zn(2+).

It is found in the cytoplasm. The enzyme catalyses tRNA(Ala) + L-alanine + ATP = L-alanyl-tRNA(Ala) + AMP + diphosphate. Functionally, catalyzes the attachment of alanine to tRNA(Ala) in a two-step reaction: alanine is first activated by ATP to form Ala-AMP and then transferred to the acceptor end of tRNA(Ala). Also edits incorrectly charged Ser-tRNA(Ala) and Gly-tRNA(Ala) via its editing domain. The protein is Alanine--tRNA ligase of Ehrlichia chaffeensis (strain ATCC CRL-10679 / Arkansas).